The following is a 435-amino-acid chain: Methylenetetrahydrofolate--tRNA-(uracil-5-)-methyltransferase TrmFO (435 aa).

9–14 (GAGLAG) contributes to the FAD binding site.

The protein belongs to the MnmG family. TrmFO subfamily. FAD serves as cofactor.

Its subcellular location is the cytoplasm. The catalysed reaction is uridine(54) in tRNA + (6R)-5,10-methylene-5,6,7,8-tetrahydrofolate + NADH + H(+) = 5-methyluridine(54) in tRNA + (6S)-5,6,7,8-tetrahydrofolate + NAD(+). It carries out the reaction uridine(54) in tRNA + (6R)-5,10-methylene-5,6,7,8-tetrahydrofolate + NADPH + H(+) = 5-methyluridine(54) in tRNA + (6S)-5,6,7,8-tetrahydrofolate + NADP(+). In terms of biological role, catalyzes the folate-dependent formation of 5-methyl-uridine at position 54 (M-5-U54) in all tRNAs. The polypeptide is Methylenetetrahydrofolate--tRNA-(uracil-5-)-methyltransferase TrmFO (Enterococcus faecalis (strain ATCC 700802 / V583)).